The following is a 120-amino-acid chain: Large ribosomal subunit protein uL18 (120 aa).

It belongs to the universal ribosomal protein uL18 family. Part of the 50S ribosomal subunit; part of the 5S rRNA/L5/L18/L25 subcomplex. Contacts the 5S and 23S rRNAs.

Functionally, this is one of the proteins that bind and probably mediate the attachment of the 5S RNA into the large ribosomal subunit, where it forms part of the central protuberance. The chain is Large ribosomal subunit protein uL18 from Trichodesmium erythraeum (strain IMS101).